The primary structure comprises 433 residues: Glutamyl-tRNA reductase (433 aa).

Substrate-binding positions include 49–52, Ser114, 119–121, and Gln125; these read TCNR and EPQ. The Nucleophile role is filled by Cys50. An NADP(+)-binding site is contributed by 201-206; the sequence is GAGETI.

It belongs to the glutamyl-tRNA reductase family. In terms of assembly, homodimer.

It carries out the reaction (S)-4-amino-5-oxopentanoate + tRNA(Glu) + NADP(+) = L-glutamyl-tRNA(Glu) + NADPH + H(+). Its pathway is porphyrin-containing compound metabolism; protoporphyrin-IX biosynthesis; 5-aminolevulinate from L-glutamyl-tRNA(Glu): step 1/2. Functionally, catalyzes the NADPH-dependent reduction of glutamyl-tRNA(Glu) to glutamate 1-semialdehyde (GSA). In Histophilus somni (strain 129Pt) (Haemophilus somnus), this protein is Glutamyl-tRNA reductase.